Reading from the N-terminus, the 585-residue chain is MNLFTDFEARIKTALEQIDLVREKRSELDFGRIAVEPPRDASHGDVATNAAMVLAKPLGTNPRALADVIIAKLKEDADVADVSVAGPGFINIRLAVGYWQRLLASIIGAGIDYGRSSLGEGRTVNVEYVSANPTGPMHVGHCRGAVVGDALANLLAFAGYGVEKEYYINDAGSQIDVLARSVFLRYREALGERIGEIPSGLYPGDYLVPVGQSLAADYGVRLHNMPEEEWMPIVKDRTIDAMMAMIREDLAALNVHHDIFFSERTLHANGAAAIRTAINDLTFKGYVYKGTLPPPKGQLPEDWEDREQTLFRSTEVGDDIDRPLIKSDGSYTYFAADVAYFKNKFDRGFEEMIYVLGADHGGYVKRLEAVARGVSDGKAKLTVLLCQLVKLYRNGEPVKMSKRSGDFVTLRDVVEEVGRDSVRFMMLYRKNSEPLDFDFAKVTEQSKDNPVFYVQYAHARCMSVFRQAKEAFAGLDVSPEDLAKAVAGIEDPAELQLVAKLAEFPRIIESAAQSQEPHRIAFYLYDLASAFHAHWNKGKDQPELRFVNDKNRESTIARLGLVYAVASVLKSGLAITGTAAPDEMR.

Residues 131–141 carry the 'HIGH' region motif; it reads ANPTGPMHVGH.

Belongs to the class-I aminoacyl-tRNA synthetase family. Monomer.

It is found in the cytoplasm. The enzyme catalyses tRNA(Arg) + L-arginine + ATP = L-arginyl-tRNA(Arg) + AMP + diphosphate. The polypeptide is Arginine--tRNA ligase (Rhizobium etli (strain ATCC 51251 / DSM 11541 / JCM 21823 / NBRC 15573 / CFN 42)).